The sequence spans 363 residues: Aminomethyltransferase (363 aa).

Belongs to the GcvT family. As to quaternary structure, the glycine cleavage system is composed of four proteins: P, T, L and H.

The catalysed reaction is N(6)-[(R)-S(8)-aminomethyldihydrolipoyl]-L-lysyl-[protein] + (6S)-5,6,7,8-tetrahydrofolate = N(6)-[(R)-dihydrolipoyl]-L-lysyl-[protein] + (6R)-5,10-methylene-5,6,7,8-tetrahydrofolate + NH4(+). The glycine cleavage system catalyzes the degradation of glycine. The chain is Aminomethyltransferase from Staphylococcus epidermidis (strain ATCC 35984 / DSM 28319 / BCRC 17069 / CCUG 31568 / BM 3577 / RP62A).